The primary structure comprises 276 residues: Diaminopimelate epimerase (276 aa).

Substrate contacts are provided by asparagine 13, glutamine 46, and asparagine 66. The Proton donor role is filled by cysteine 75. Substrate is bound by residues glycine 76 to asparagine 77, asparagine 159, asparagine 192, and glutamate 210 to arginine 211. The Proton acceptor role is filled by cysteine 219. A substrate-binding site is contributed by glycine 220 to serine 221.

Belongs to the diaminopimelate epimerase family. In terms of assembly, homodimer.

Its subcellular location is the cytoplasm. The enzyme catalyses (2S,6S)-2,6-diaminopimelate = meso-2,6-diaminopimelate. It participates in amino-acid biosynthesis; L-lysine biosynthesis via DAP pathway; DL-2,6-diaminopimelate from LL-2,6-diaminopimelate: step 1/1. Catalyzes the stereoinversion of LL-2,6-diaminopimelate (L,L-DAP) to meso-diaminopimelate (meso-DAP), a precursor of L-lysine and an essential component of the bacterial peptidoglycan. This Coxiella burnetii (strain CbuK_Q154) (Coxiella burnetii (strain Q154)) protein is Diaminopimelate epimerase.